The chain runs to 418 residues: MRPQATLTVLPVERPLVGRVSPPGSKSITNRALLLAGLAKGTSRLTGALKSDDTRVMSEALRLMGVQVDEPDDSTFVVTSSGHWQAPQQALFLGNAGTATRFLTAALANFEGDFVVDGDEYMRKRPIGPLVDALQRMGVEVSAPSGCPPVAIKGKGGLEAGRIEIDGNLSSQYVSALLMAGACGKGPVEVALTGSEIGARGYVDLTLAAMQAFGAEVQAIGETAWKVSATGYRATDFHIEPDASAATYLWAAQALTEGDIDLGVASDAFTQPDALASQIIASFPNMPAVIDGSQMQDAIPTLAVLAAFNRQPVRFVGIANLRVKECDRISALSHGLCAIAPGLAVEEGDDLLVHANPALAGTTVDALIDTHSDHRIAMCFALAGLKIAGIRILDPDCVGKTYPGYWDALASLGVRVQR.

Residues lysine 26, serine 27, and arginine 31 each coordinate 3-phosphoshikimate. Lysine 26 contacts phosphoenolpyruvate. 2 residues coordinate phosphoenolpyruvate: glycine 97 and arginine 125. Positions 170, 171, 172, 297, 320, and 324 each coordinate 3-phosphoshikimate. Glutamine 172 provides a ligand contact to phosphoenolpyruvate. The Proton acceptor role is filled by aspartate 297. The phosphoenolpyruvate site is built by arginine 328, arginine 375, and lysine 400.

The protein belongs to the EPSP synthase family. As to quaternary structure, monomer.

The protein resides in the cytoplasm. It catalyses the reaction 3-phosphoshikimate + phosphoenolpyruvate = 5-O-(1-carboxyvinyl)-3-phosphoshikimate + phosphate. Its pathway is metabolic intermediate biosynthesis; chorismate biosynthesis; chorismate from D-erythrose 4-phosphate and phosphoenolpyruvate: step 6/7. Functionally, catalyzes the transfer of the enolpyruvyl moiety of phosphoenolpyruvate (PEP) to the 5-hydroxyl of shikimate-3-phosphate (S3P) to produce enolpyruvyl shikimate-3-phosphate and inorganic phosphate. The chain is 3-phosphoshikimate 1-carboxyvinyltransferase from Pseudomonas savastanoi pv. phaseolicola (strain 1448A / Race 6) (Pseudomonas syringae pv. phaseolicola (strain 1448A / Race 6)).